Here is an 846-residue protein sequence, read N- to C-terminus: MASSHTPMMQQYLRIKTDYPDMLLFYRMGDFYELFFDDAKRASQLLDLTLTHRGQSADKPIPMAGVPYHAVENYLARLLKKGESVAICEQIGDPATSKGPVERQVTRIITPGTVTDEALLDARKDNILLAIHTQKQKIGIAWVDLGGGRFHLQELTEEHQLNAELVRLQPAELLCKESTPLPSFCSNFAVKFRPGWEFDASNAHKLLCEQFSVTDLSAFGEQNYPTALIAAGALLAYLKTTQKQSLPHLTTLTLEQSEDYLQLDASTQKHLELFENIHGGGEHCLLSILDKTACAMGSRLLKRWLGKPLKQHAIIQTRQQAIKEIIFLQQDVSLHQLIKQCADVERIVSRIALKSARPRDLVSLLQTLTLLPAIHDELQENKSLLINEIKKEISPLPLLQQLLETAIIDNPPMLIRDGGVIAPGFDEELDELRNLSSNAHETLVKLEQEEKNRTGLSTLKLGYNSVQGFYIELSKAQAQNAPPHFHRKQTLKNVERYITPELKLFEDKVLSAQSKALAREKWLYDNLLEEIQQYIPELSDLAKSLAQLDVLVTLAERAQSLNWNCPNLVPESGIMIQAGRHPVIEPLLQERFIANDLELKPNQNMLLITGPNMGGKSTYMRQTALIVLLAHIGSFVPADKVTLGPLDRIFTRIGASDDLSSGRSTFMVEMTETAQILRQATSQSLVLIDEIGRGTSTYDGMALAYASCAFLASTIKAYTLFSTHYLELTELPKEFSCIRNVHLQASIKTGQIVFLYRVEEGCANRSYGLEVAELAGIPKEVLKLAHEHLNQIQDTQSILVQTQIIKPPTSPVLTELKKIDPDRLTAKEALDLIYKLKHLECAESIN.

610–617 (GPNMGGKS) serves as a coordination point for ATP.

This sequence belongs to the DNA mismatch repair MutS family.

This protein is involved in the repair of mismatches in DNA. It is possible that it carries out the mismatch recognition step. This protein has a weak ATPase activity. This chain is DNA mismatch repair protein MutS, found in Legionella pneumophila (strain Corby).